The chain runs to 525 residues: Bifunctional purine biosynthesis protein PurH (525 aa).

Positions 1–145 (MSNVERALIS…KNNASVGIVT (145 aa)) constitute an MGS-like domain.

The protein belongs to the PurH family.

The catalysed reaction is (6R)-10-formyltetrahydrofolate + 5-amino-1-(5-phospho-beta-D-ribosyl)imidazole-4-carboxamide = 5-formamido-1-(5-phospho-D-ribosyl)imidazole-4-carboxamide + (6S)-5,6,7,8-tetrahydrofolate. The enzyme catalyses IMP + H2O = 5-formamido-1-(5-phospho-D-ribosyl)imidazole-4-carboxamide. It functions in the pathway purine metabolism; IMP biosynthesis via de novo pathway; 5-formamido-1-(5-phospho-D-ribosyl)imidazole-4-carboxamide from 5-amino-1-(5-phospho-D-ribosyl)imidazole-4-carboxamide (10-formyl THF route): step 1/1. The protein operates within purine metabolism; IMP biosynthesis via de novo pathway; IMP from 5-formamido-1-(5-phospho-D-ribosyl)imidazole-4-carboxamide: step 1/1. The protein is Bifunctional purine biosynthesis protein PurH of Alcanivorax borkumensis (strain ATCC 700651 / DSM 11573 / NCIMB 13689 / SK2).